The primary structure comprises 131 residues: Cuticle protein 79, isoform A (131 aa).

A run of 3 repeats spans residues 37-40 (AAPA), 45-48 (AAPA), and 53-56 (AAPA).

Component of the cuticle of migratory locust which contains more than 100 different structural proteins. This Locusta migratoria (Migratory locust) protein is Cuticle protein 79, isoform A.